The chain runs to 397 residues: Elongation factor Tu (397 aa).

One can recognise a tr-type G domain in the interval 10–206 (KPHVNVGTIG…TMDTYFPQPE (197 aa)). The segment at 19–26 (GHVDHGKT) is G1. A GTP-binding site is contributed by 19–26 (GHVDHGKT). Threonine 26 contacts Mg(2+). Positions 60–64 (GITIA) are G2. The segment at 81-84 (DCPG) is G3. GTP is bound by residues 81-85 (DCPGH) and 136-139 (NKAD). The G4 stretch occupies residues 136–139 (NKAD). Positions 174–176 (SAL) are G5.

This sequence belongs to the TRAFAC class translation factor GTPase superfamily. Classic translation factor GTPase family. EF-Tu/EF-1A subfamily. As to quaternary structure, monomer.

The protein resides in the cytoplasm. The catalysed reaction is GTP + H2O = GDP + phosphate + H(+). GTP hydrolase that promotes the GTP-dependent binding of aminoacyl-tRNA to the A-site of ribosomes during protein biosynthesis. The chain is Elongation factor Tu from Coxiella burnetii (strain Dugway 5J108-111).